A 269-amino-acid chain; its full sequence is Enoyl-[acyl-carrier-protein] reductase [NADH] (269 aa).

Residues 20-21 (SI), 64-65 (DV), and 95-96 (IG) contribute to the NAD(+) site. Tyr-158 is a substrate binding site. 2 residues coordinate NAD(+): Lys-165 and Ile-194. Position 266 is a phosphothreonine (Thr-266).

The protein belongs to the short-chain dehydrogenases/reductases (SDR) family. FabI subfamily. Homodimer. Homotetramer. Is phosphorylated in vivo. Phosphorylation on Thr-266 decreases enzymatic activity.

Its subcellular location is the secreted. It localises to the cell wall. The catalysed reaction is a 2,3-saturated acyl-[ACP] + NAD(+) = a (2E)-enoyl-[ACP] + NADH + H(+). It carries out the reaction a 2,3-saturated acyl-CoA + NAD(+) = a (2E)-enoyl-CoA + NADH + H(+). It catalyses the reaction (2E)-octenoyl-CoA + NADH + H(+) = octanoyl-CoA + NAD(+). The enzyme catalyses (2E)-dodecenoyl-CoA + NADH + H(+) = dodecanoyl-CoA + NAD(+). It functions in the pathway lipid metabolism; mycolic acid biosynthesis. InhA activity is controlled via phosphorylation: phosphorylation on Thr-266 decreases InhA activity and likely negatively regulates biosynthesis of mycolic acids and growth of the bacterium. InhA activity is likely inhibited by activated isoniazid, hexadecynoyl-CoA and octadecynoyl-CoA, which also block the biosynthesis of mycolic acids. The antitubercular pro-drug isoniazid (INH) is oxidatively activated by the catalase-peroxidase KatG and then covalently binds NAD to form an adduct that inhibits the activity of InhA. The inhibitory adduct is the isonicotinic-acyl-NADH where the isonicotinic-acyl group replaces the 4S (and not the 4R) hydrogen of NADH. Similarly, the antitubercular pro-drugs ethionamide (ETH) and prothionamide (PTH) are activated by the flavoprotein monooxygenase EthA, and forms an adduct with NAD (ETH-NAD and PTH-NAD, respectively) that is a tight-binding inhibitor of InhA. In terms of biological role, enoyl-ACP reductase of the type II fatty acid syntase (FAS-II) system, which is involved in the biosynthesis of mycolic acids, a major component of mycobacterial cell walls. Catalyzes the NADH-dependent reduction of the double bond of 2-trans-enoyl-[acyl-carrier protein], an essential step in the fatty acid elongation cycle of the FAS-II pathway. Shows preference for long-chain fatty acyl thioester substrates (&gt;C16), and can also use 2-trans-enoyl-CoAs as alternative substrates. The mycobacterial FAS-II system utilizes the products of the FAS-I system as primers to extend fatty acyl chain lengths up to C56, forming the meromycolate chain that serves as the precursor for final mycolic acids. Its function is as follows. Is the primary target of the first-line antitubercular drug isoniazid (INH) and of the second-line drug ethionamide (ETH). Overexpressed inhA confers INH and ETH resistance to M.smegmatis. The mechanism of isoniazid action against InhA is covalent attachment of the activated form of the drug to the nicotinamide ring of NAD and binding of the INH-NAD adduct to the active site of InhA. Similarly, the ETH-NAD adduct binds InhA. The protein is Enoyl-[acyl-carrier-protein] reductase [NADH] of Mycolicibacterium smegmatis (strain ATCC 700084 / mc(2)155) (Mycobacterium smegmatis).